The chain runs to 440 residues: Transposon Ty1-ER2 Gag polyprotein (440 aa).

Polar residues-rich tracts occupy residues 1–10 (MESQQLSNYP), 48–60 (TKANSQQTTTPAS), and 127–152 (QSQFPQYPSSVGTPLSTPSPESGNTF). Disordered stretches follow at residues 1 to 93 (MESQ…MMTQ), 126 to 173 (PQSQ…RPPP), and 352 to 440 (GSRN…PETY). Positions 153-165 (TDSSSADSDMTST) are enriched in low complexity. Residues 299–401 (NNGIHINNKV…NSKSKTARAH (103 aa)) are RNA-binding. The segment covering 402 to 418 (NVSTSNNSPSTDNDSIS) has biased composition (low complexity). A Phosphoserine modification is found at serine 416. A compositionally biased stretch (polar residues) spans 419–428 (KSTTEPIQLN). A compositionally biased stretch (basic and acidic residues) spans 429-440 (NKHDLHLRPETY).

As to quaternary structure, homotrimer.

The protein resides in the cytoplasm. Its function is as follows. Capsid protein (CA) is the structural component of the virus-like particle (VLP), forming the shell that encapsulates the retrotransposons dimeric RNA genome. The particles are assembled from trimer-clustered units and there are holes in the capsid shells that allow for the diffusion of macromolecules. CA also has nucleocapsid-like chaperone activity, promoting primer tRNA(i)-Met annealing to the multipartite primer-binding site (PBS), dimerization of Ty1 RNA and initiation of reverse transcription. This is Transposon Ty1-ER2 Gag polyprotein (TY1A-ER2) from Saccharomyces cerevisiae (strain ATCC 204508 / S288c) (Baker's yeast).